A 395-amino-acid polypeptide reads, in one-letter code: S-adenosylmethionine synthase 5 (395 aa).

Glu-10 is a binding site for Mg(2+). An ATP-binding site is contributed by His-16. Residue Glu-44 participates in K(+) binding. L-methionine-binding residues include Glu-57 and Gln-100. ATP contacts are provided by residues 168-170 (DGK), 236-239 (SGRF), Asp-247, 253-254 (RK), Ala-270, Lys-274, and Lys-278. Asp-247 provides a ligand contact to L-methionine. Lys-278 is a binding site for L-methionine.

It belongs to the AdoMet synthase family. As to quaternary structure, homotetramer. Mn(2+) is required as a cofactor. Requires Mg(2+) as cofactor. It depends on Co(2+) as a cofactor. K(+) serves as cofactor.

The protein localises to the cytoplasm. The enzyme catalyses L-methionine + ATP + H2O = S-adenosyl-L-methionine + phosphate + diphosphate. Its pathway is amino-acid biosynthesis; S-adenosyl-L-methionine biosynthesis; S-adenosyl-L-methionine from L-methionine: step 1/1. Catalyzes the formation of S-adenosylmethionine from methionine and ATP. The reaction comprises two steps that are both catalyzed by the same enzyme: formation of S-adenosylmethionine (AdoMet) and triphosphate, and subsequent hydrolysis of the triphosphate. The chain is S-adenosylmethionine synthase 5 (METK5) from Populus trichocarpa (Western balsam poplar).